The primary structure comprises 164 residues: UPF0225 protein Shewmr4_2054 (164 aa).

This sequence belongs to the UPF0225 family.

The sequence is that of UPF0225 protein Shewmr4_2054 from Shewanella sp. (strain MR-4).